Here is a 261-residue protein sequence, read N- to C-terminus: Adenosylcobinamide-GDP ribazoletransferase (261 aa).

The next 7 membrane-spanning stretches (helical) occupy residues 4–26 (GLNG…QIPW), 40–60 (LTGL…SPFL), 62–82 (PLVL…GLHL), 110–130 (VGAF…LLLM), 140–160 (FTWL…VQLI), 197–217 (CFLL…IWLF), and 237–257 (IGAS…TFFL).

Belongs to the CobS family. The cofactor is Mg(2+).

It localises to the cell membrane. It carries out the reaction alpha-ribazole + adenosylcob(III)inamide-GDP = adenosylcob(III)alamin + GMP + H(+). The enzyme catalyses alpha-ribazole 5'-phosphate + adenosylcob(III)inamide-GDP = adenosylcob(III)alamin 5'-phosphate + GMP + H(+). It participates in cofactor biosynthesis; adenosylcobalamin biosynthesis; adenosylcobalamin from cob(II)yrinate a,c-diamide: step 7/7. Its function is as follows. Joins adenosylcobinamide-GDP and alpha-ribazole to generate adenosylcobalamin (Ado-cobalamin). Also synthesizes adenosylcobalamin 5'-phosphate from adenosylcobinamide-GDP and alpha-ribazole 5'-phosphate. This Halalkalibacterium halodurans (strain ATCC BAA-125 / DSM 18197 / FERM 7344 / JCM 9153 / C-125) (Bacillus halodurans) protein is Adenosylcobinamide-GDP ribazoletransferase.